Here is a 327-residue protein sequence, read N- to C-terminus: Zinc transport protein ZntB (327 aa).

The Cytoplasmic segment spans residues 1–271; it reads METIYGSSLK…AMNRRTYTMS (271 aa). Residues 272–292 traverse the membrane as a helical segment; it reads LLAMIFLPTTFLTGLFGVNLG. The Periplasmic portion of the chain corresponds to 293–300; that stretch reads GIPGNEYY. Residues 301 to 321 traverse the membrane as a helical segment; the sequence is LGFAIFCLLLFGLVLFVAWWL. The Cytoplasmic portion of the chain corresponds to 322 to 327; the sequence is KKSKWL.

This sequence belongs to the CorA metal ion transporter (MIT) (TC 1.A.35) family.

It localises to the cell inner membrane. The enzyme catalyses Zn(2+)(out) + H(+)(out) = Zn(2+)(in) + H(+)(in). Its function is as follows. Zinc transporter. Acts as a Zn(2+):proton symporter, which likely mediates zinc ion uptake. This chain is Zinc transport protein ZntB, found in Photorhabdus laumondii subsp. laumondii (strain DSM 15139 / CIP 105565 / TT01) (Photorhabdus luminescens subsp. laumondii).